A 614-amino-acid polypeptide reads, in one-letter code: Pentatricopeptide repeat-containing protein At1g63080, mitochondrial (614 aa).

Residues 1–7 (MSLAKRF) constitute a mitochondrion transit peptide. PPR repeat units follow at residues 64 to 98 (SIVE…GVSH), 99 to 133 (NLYT…GYGP), 134 to 168 (SIVT…GYQP), 169 to 203 (DTVT…GCQP), 204 to 238 (DLVT…KIEA), 239 to 273 (DVVI…GIRP), 274 to 308 (DVFT…KINP), 309 to 343 (NVVT…SIDP), 344 to 378 (NIVT…DCLP), 379 to 413 (DVVT…GLVG), 414 to 448 (NTVT…GVHP), 449 to 483 (NIMT…KMEP), 484 to 518 (DIYT…GVKP), 519 to 553 (DVIA…GPLP), and 554 to 588 (DSGT…RFAG).

Belongs to the PPR family. P subfamily.

It localises to the mitochondrion. The sequence is that of Pentatricopeptide repeat-containing protein At1g63080, mitochondrial from Arabidopsis thaliana (Mouse-ear cress).